The sequence spans 362 residues: tRNA-specific 2-thiouridylase MnmA (362 aa).

Residues 8–15 (AMSGGVDS) and M35 contribute to the ATP site. An interaction with target base in tRNA region spans residues 95 to 97 (NPD). Residue C100 is the Nucleophile of the active site. C100 and C196 are disulfide-bonded. An ATP-binding site is contributed by G124. Residues 146–148 (KDQ) are interaction with tRNA. C196 serves as the catalytic Cysteine persulfide intermediate. An interaction with tRNA region spans residues 303-304 (RY).

The protein belongs to the MnmA/TRMU family.

The protein localises to the cytoplasm. It carries out the reaction S-sulfanyl-L-cysteinyl-[protein] + uridine(34) in tRNA + AH2 + ATP = 2-thiouridine(34) in tRNA + L-cysteinyl-[protein] + A + AMP + diphosphate + H(+). Its function is as follows. Catalyzes the 2-thiolation of uridine at the wobble position (U34) of tRNA, leading to the formation of s(2)U34. The polypeptide is tRNA-specific 2-thiouridylase MnmA (Chlamydia abortus (strain DSM 27085 / S26/3) (Chlamydophila abortus)).